The chain runs to 1037 residues: MANYFIDRPVFAWVLAIIMMLAGGLAIMNLPVAQYPQIAPPTITVSATYPGADAQTVEDSVTQVIEQNMNGLDGLMYMSSTSDAAGNASITLTFETGTSPDIAQVQVQNKLQLAMPSLPEAVQQQGISVDKSSSNILMVAAFISDNGSLNQYDIADYVASNIKDPLSRTAGVGSVQLFGSEYAMRIWLDPQKLNKYNLVPSDVISQIKVQNNQISGGQLGGMPQAADQQLNASIIVQTRLQTPEEFGKILLKVQQDGSQVLLRDVARVELGAEDYSTVARYNGKPAAGIAIKLATGANALDTSRAVKEELNRLSAYFPASLKTVYPYDTTPFIEISIQEVFKTLVEAIILVFLVMYLFLQNFRATIIPTIAVPVVILGTFAILSAVGFTINTLTMFGMVLAIGLLVDDAIVVVENVERVIAEDKLPPKEATHKSMGQIQRALVGIAVVLSAVFMPMAFMSGATGEIYRQFSITLISSMLLSVFVAMSLTPALCATILKAAPEGGHKPNALFARFNTLFEKSTQHYTDSTRSLLRCTGRYMVIYLLICAGMAVLFLRTPTSFLPEEDQGVFMTTAQLPSGATMVNTTKVLQQVTDYYLTKEKDNVQSVFTVGGFGFSGQGQNNGLAFISLKPWSERVGEENSVTAIIQRAMIALSSINKAVVFPFNLPAVAELGTASGFDMELLDNGNLGHEKLTQARNELLSLAAQSPNQVTGVRPNGLEDTPMFKVNVNAAKAEAMGVALSDINQTISTAFGSSYVNDFLNQGRVKKVYVQAGTPFRMLPDNINQWYVRNASGTMAPLSAYSSTEWTYGSPRLERYNGIPSMEILGEAAAGKSTGDAMKFMADLVAKLPAGVGYSWTGLSYQEALSSNQAPALYAISLVVVFLALAALYESWSIPFSVMLVVPLGVVGALLATDLRGLSNDVYFQVGLLTTIGLSAKNAILIVEFAVEMMQKEGKTPIEAIIEAARMRLRPILMTSLAFILGVLPLVISHGAGSGAQNAVGTGVMGGMFAATVLAIYFVPVFFVVVEHLFARFKKA.

Residues 1 to 9 (MANYFIDRP) are Cytoplasmic-facing. The helical transmembrane segment at 10–30 (VFAWVLAIIMMLAGGLAIMNL) threads the bilayer. The Periplasmic portion of the chain corresponds to 31–338 (PVAQYPQIAP…TTPFIEISIQ (308 aa)). The chain crosses the membrane as a helical span at residues 339-359 (EVFKTLVEAIILVFLVMYLFL). At 360 to 369 (QNFRATIIPT) the chain is on the cytoplasmic side. Residues 370-390 (IAVPVVILGTFAILSAVGFTI) form a helical membrane-spanning segment. The Periplasmic segment spans residues 391-392 (NT). A helical transmembrane segment spans residues 393 to 413 (LTMFGMVLAIGLLVDDAIVVV). Residues 414–441 (ENVERVIAEDKLPPKEATHKSMGQIQRA) lie on the Cytoplasmic side of the membrane. The chain crosses the membrane as a helical span at residues 442 to 462 (LVGIAVVLSAVFMPMAFMSGA). Residues 463-471 (TGEIYRQFS) lie on the Periplasmic side of the membrane. The chain crosses the membrane as a helical span at residues 472–492 (ITLISSMLLSVFVAMSLTPAL). At 493–534 (CATILKAAPEGGHKPNALFARFNTLFEKSTQHYTDSTRSLLR) the chain is on the cytoplasmic side. A helical membrane pass occupies residues 535 to 555 (CTGRYMVIYLLICAGMAVLFL). The Periplasmic segment spans residues 556–870 (RTPTSFLPEE…SYQEALSSNQ (315 aa)). A helical membrane pass occupies residues 871-891 (APALYAISLVVVFLALAALYE). Residue Ser-892 is a topological domain, cytoplasmic. Residues 893–913 (WSIPFSVMLVVPLGVVGALLA) traverse the membrane as a helical segment. Over 914–927 (TDLRGLSNDVYFQV) the chain is Periplasmic. A helical transmembrane segment spans residues 928–948 (GLLTTIGLSAKNAILIVEFAV). Topologically, residues 949–972 (EMMQKEGKTPIEAIIEAARMRLRP) are cytoplasmic. Residues 973–993 (ILMTSLAFILGVLPLVISHGA) traverse the membrane as a helical segment. At 994–1006 (GSGAQNAVGTGVM) the chain is on the periplasmic side. The helical transmembrane segment at 1007 to 1027 (GGMFAATVLAIYFVPVFFVVV) threads the bilayer. At 1028 to 1037 (EHLFARFKKA) the chain is on the cytoplasmic side.

This sequence belongs to the resistance-nodulation-cell division (RND) (TC 2.A.6) family. In terms of assembly, homotrimer. Part of the tripartite efflux system MdtEF-TolC, which is composed of an inner membrane transporter, MdtF, a membrane fusion protein, MdtE, and an outer membrane component, TolC. The complex forms a large protein conduit and can translocate molecules across both the inner and outer membranes.

It localises to the cell inner membrane. Functionally, part of the tripartite efflux system MdtEF-TolC, which confers resistance to various compounds. The protein is Multidrug resistance protein MdtF (mdtF) of Escherichia coli O157:H7.